The sequence spans 686 residues: Zinc finger protein 7 (686 aa).

In terms of domain architecture, KRAB spans 4-76 (VTFGDVAVHF…DLQGAEGTEA (73 aa)). Residues K81 and K101 each participate in a glycyl lysine isopeptide (Lys-Gly) (interchain with G-Cter in SUMO2) cross-link. Phosphoserine occurs at positions 126 and 138. 6 consecutive C2H2-type zinc fingers follow at residues 223–245 (SRCQ…NNCH), 250–272 (YECA…QRIH), 278–300 (FKCT…QRIH), 306–328 (YRCE…QRIH), 334–356 (YGCR…QRTH), and 362–384 (YPCK…QRMH). Glycyl lysine isopeptide (Lys-Gly) (interchain with G-Cter in SUMO2) cross-links involve residues K279 and K292. A Glycyl lysine isopeptide (Lys-Gly) (interchain with G-Cter in SUMO2) cross-link involves residue K393. C2H2-type zinc fingers lie at residues 413-435 (FKCD…QLIH), 441-463 (YKCN…QRTH), 469-491 (FKCD…QRIH), 497-519 (YVCN…QRIH), 525-547 (YECL…QRVH), 553-575 (YKCN…QIIH), 581-603 (YECS…QRIH), 634-656 (HQCE…QRIH), and 662-684 (YKCN…QKIH).

Belongs to the krueppel C2H2-type zinc-finger protein family.

It localises to the nucleus. May be involved in transcriptional regulation. This is Zinc finger protein 7 (ZNF7) from Pongo abelii (Sumatran orangutan).